Here is a 540-residue protein sequence, read N- to C-terminus: Chaperonin GroEL (540 aa).

ATP is bound by residues 29–32 (TLGP), 86–90 (DGTTT), Gly413, 476–478 (NAA), and Asp492.

It belongs to the chaperonin (HSP60) family. In terms of assembly, forms a cylinder of 14 subunits composed of two heptameric rings stacked back-to-back. Interacts with the co-chaperonin GroES.

Its subcellular location is the cytoplasm. It carries out the reaction ATP + H2O + a folded polypeptide = ADP + phosphate + an unfolded polypeptide.. In terms of biological role, together with its co-chaperonin GroES, plays an essential role in assisting protein folding. The GroEL-GroES system forms a nano-cage that allows encapsulation of the non-native substrate proteins and provides a physical environment optimized to promote and accelerate protein folding. The polypeptide is Chaperonin GroEL (Streptococcus agalactiae serotype V (strain ATCC BAA-611 / 2603 V/R)).